The sequence spans 1983 residues: Nonribosomal peptide synthetase verP (1983 aa).

The interval 11–405 is adenylation 1; sequence FAQAASRCPD…FRGRKDRTVK (395 aa). The Carrier 1 domain occupies 526–602; it reads DRHLDTLLTV…DVAPLITSRA (77 aa). At S563 the chain carries O-(pantetheine 4'-phosphoryl)serine. The interval 769–1047 is condensation 1; it reads ETDELTVVLT…GQHFKHALYS (279 aa). Residues 1089-1469 form an adenylation 2 region; the sequence is QVMGQFPSLI…GRIDRLVKLR (381 aa). In terms of domain architecture, Carrier 2 spans 1584-1662; the sequence is ITRPKIEDKL…DQINMVRALL (79 aa). S1622 carries the post-translational modification O-(pantetheine 4'-phosphoryl)serine. Residues 1652–1976 form a condensation 2 region; sequence KDQINMVRAL…GGLEHPLFEC (325 aa).

The protein belongs to the NRP synthetase family.

It participates in mycotoxin biosynthesis. Functionally, nonribosomal peptide synthetase; part of the gene cluster that mediates the biosynthesis of 11'-deoxyverticillin A, one of the dimeric epipolythiodioxopiperazines (ETPs) from the verticillin family that act as mycotoxins. 11'-deoxyverticillin A is required for normal conidiation. The nonribosomal peptide synthetase verP is speculated to be responsible for condensation of amino acids to form the carbon skeleton of verticillin, whereas the cluster-specific tailoring enzymes are involved in further modifications leading to the production of 11'-deoxyverticillin A. The sequence is that of Nonribosomal peptide synthetase verP from Clonostachys rogersoniana.